The primary structure comprises 565 residues: Anaphase-promoting complex subunit 7 (565 aa).

10 TPR repeats span residues 101–134 (EIEVKYKMAECYTMLKQDKDAIAILDGIPSRQRT), 169–202 (LDAILGLLSLSVKGAEVASMTMNVIQTVPNLDWL), 203–236 (SVWIKAYAFVHTGDNSRAISTICSLEKKSLLRDN), 237–270 (VDLLGSLADLYFRAGDNKNSVLKFEQAQMLDPYL), 339–372 (VQALLLKGAALRNMGRVQEAIIHFREAIRLAPCR), 373–406 (LDCYEGLIECYLASNSIREAMVMANNVYKTLGAN), 407–441 (AQTLTLLATVCLEDPVTQEKAKTLLDKALTQRPDY), 442–474 (IKAVVKKAELLSREQKYEDGIALLRNALANQSD), 475–508 (CVLHRILGDFLVAVNEYQEAMDQYSIALSLDPND), and 509–531 (QKSLEGMQKMEKEESPTDATQEE). Residue lysine 229 is modified to N6-acetyllysine. The span at 513-523 (EGMQKMEKEES) shows a compositional bias: basic and acidic residues. Positions 513 to 565 (EGMQKMEKEESPTDATQEEDVDDMEGSGEEGDLEGSDSEAAQWADQEQWFGMQ) are disordered. The segment covering 528–549 (TQEEDVDDMEGSGEEGDLEGSD) has biased composition (acidic residues).

Belongs to the APC7 family. In terms of assembly, V-shaped homodimer. The mammalian APC/C is composed at least of 14 distinct subunits ANAPC1, ANAPC2, CDC27/APC3, ANAPC4, ANAPC5, CDC16/APC6, ANAPC7, CDC23/APC8, ANAPC10, ANAPC11, CDC26/APC12, ANAPC13, ANAPC15 and ANAPC16 that assemble into a complex of at least 19 chains with a combined molecular mass of around 1.2 MDa; APC/C interacts with FZR1 and FBXO5.

The protein resides in the cytoplasm. Its subcellular location is the cytoskeleton. It localises to the nucleus. The protein localises to the spindle. The protein operates within protein modification; protein ubiquitination. Its function is as follows. Component of the anaphase promoting complex/cyclosome (APC/C), a cell cycle-regulated E3 ubiquitin ligase that controls progression through mitosis and the G1 phase of the cell cycle. The APC/C complex acts by mediating ubiquitination and subsequent degradation of target proteins: it mainly mediates the formation of 'Lys-11'-linked polyubiquitin chains and, to a lower extent, the formation of 'Lys-48'- and 'Lys-63'-linked polyubiquitin chains. The APC/C complex catalyzes assembly of branched 'Lys-11'-/'Lys-48'-linked branched ubiquitin chains on target proteins. APC7 is not required for the assembly of the APC/C complex, but has an enzyme-substrate adapter activity mediating the processive ubiquitination of specific substrates. Involved in brain development through the specific ubiquitination and clearance of MKI67 from constitutive heterochromatin after neuronal progenitors exit mitosis. In Homo sapiens (Human), this protein is Anaphase-promoting complex subunit 7.